A 157-amino-acid polypeptide reads, in one-letter code: Holo-[acyl-carrier-protein] synthase (157 aa).

Mg(2+)-binding residues include aspartate 8 and glutamate 59.

Belongs to the P-Pant transferase superfamily. AcpS family. The cofactor is Mg(2+).

It is found in the cytoplasm. The catalysed reaction is apo-[ACP] + CoA = holo-[ACP] + adenosine 3',5'-bisphosphate + H(+). Its function is as follows. Transfers the 4'-phosphopantetheine moiety from coenzyme A to a Ser of acyl-carrier-protein. The sequence is that of Holo-[acyl-carrier-protein] synthase from Gluconobacter oxydans (strain 621H) (Gluconobacter suboxydans).